The chain runs to 121 residues: uncharacterized protein (121 aa).

The N-terminal stretch at 1 to 31 (MILNNKGFIRILEATIAGIMVILVFSYLVMS) is a signal peptide.

This sequence to B.burgdorferi BB0465 N-terminal region.

This is an uncharacterized protein from Methanocaldococcus jannaschii (strain ATCC 43067 / DSM 2661 / JAL-1 / JCM 10045 / NBRC 100440) (Methanococcus jannaschii).